Consider the following 265-residue polypeptide: uncharacterized protein (265 aa).

Its subcellular location is the mitochondrion. This is an uncharacterized protein from Paramecium tetraurelia.